The chain runs to 148 residues: Snaclec convulxin subunit beta (148 aa).

Residues 1-23 (MGRFIFVSFGLLVVFLSLSGSEA) form the signal peptide. 3 cysteine pairs are disulfide-bonded: cysteine 27-cysteine 38, cysteine 55-cysteine 144, and cysteine 121-cysteine 136. Residues 34–148 (YDRYCYKVFK…TYSFVCKFEA (115 aa)) enclose the C-type lectin domain.

Belongs to the snaclec family. Tetramer of heterodimers of alpha and beta subunits (alphabeta)(4); disulfide-linked. Expressed by the venom gland.

Its subcellular location is the secreted. Functionally, snake venom lectin that activates platelets by binding to the platelet collagen receptor glycoprotein VI (GP6). The indirect activation of integrin alpha-IIb/beta-3 (ITGA2B/ITGB3) also induced by the toxin is upstream the cytoskeletal translocation of GPIb, FcRgamma (FCER1G) and 14-3-3zeta (YWHAZ). This chain is Snaclec convulxin subunit beta, found in Crotalus durissus terrificus (South American rattlesnake).